Here is a 405-residue protein sequence, read N- to C-terminus: Deoxyguanosinetriphosphate triphosphohydrolase-like protein (405 aa).

Residues 75 to 219 (RLTHTIEVAQ…AAIADDIAYN (145 aa)) enclose the HD domain.

Belongs to the dGTPase family. Type 2 subfamily.

The sequence is that of Deoxyguanosinetriphosphate triphosphohydrolase-like protein from Rhizobium meliloti (strain 1021) (Ensifer meliloti).